Here is a 333-residue protein sequence, read N- to C-terminus: Gap junction alpha-4 protein (333 aa).

The Cytoplasmic segment spans residues 1–20; sequence MGDWGFLEKLLDQVQEHSTV. A helical membrane pass occupies residues 21-40; it reads VGKIWLTVLFIFRILILGLA. Topologically, residues 41–76 are extracellular; the sequence is GESVWGDEQSDFECNTAQPGCTNVCYDQAFPISHIR. A helical membrane pass occupies residues 77-99; sequence YWVLQFLFVSTPTLVYLGHVIYL. The Cytoplasmic segment spans residues 100–148; sequence SRREERLRQKEGELRALPAKDPQVERALAAVERQMAKISVAEDGRLRIR. The helical transmembrane segment at 149 to 165 threads the bilayer; that stretch reads GALMGTYVASVLCKSVL. The Extracellular segment spans residues 166-207; that stretch reads EAGFLYGQWRLYGWTMEPVFVCQRAPCPYLVDCFVSRPTEKT. A helical membrane pass occupies residues 208–230; the sequence is IFIIFMLVVGLISLVLNLLELVH. Topologically, residues 231 to 333 are cytoplasmic; it reads LLCRCLSRGM…SSSASKKQYV (103 aa). Positions 292 to 333 are disordered; that stretch reads ANLTTEERLASSRPPLFLDPPPQNGQKPPSRPSSSASKKQYV. Residues 323–333 show a composition bias toward low complexity; it reads PSSSASKKQYV.

This sequence belongs to the connexin family. Alpha-type (group II) subfamily. In terms of assembly, a connexon is composed of a hexamer of connexins. As to expression, expressed in multiple organs and tissues, including heart, uterus, ovary, and blood vessel endothelium.

It localises to the cell membrane. The protein localises to the cell junction. It is found in the gap junction. Functionally, one gap junction consists of a cluster of closely packed pairs of transmembrane channels, the connexons, through which materials of low MW diffuse from one cell to a neighboring cell. This is Gap junction alpha-4 protein (GJA4) from Homo sapiens (Human).